We begin with the raw amino-acid sequence, 465 residues long: Siroheme synthase (465 aa).

A precorrin-2 dehydrogenase /sirohydrochlorin ferrochelatase region spans residues 1-203 (MEYLPLFHNL…GRTAEAERLL (203 aa)). Residues 22 to 23 (EI) and 43 to 44 (PS) each bind NAD(+). At Ser128 the chain carries Phosphoserine. The interval 216-465 (GEVYLVGAGP…WFEGAQAAGR (250 aa)) is uroporphyrinogen-III C-methyltransferase. Pro225 serves as a coordination point for S-adenosyl-L-methionine. Asp248 (proton acceptor) is an active-site residue. Lys270 (proton donor) is an active-site residue. S-adenosyl-L-methionine is bound by residues 301–303 (GGD), Ile306, 331–332 (TA), Met383, and Gly412.

It in the N-terminal section; belongs to the precorrin-2 dehydrogenase / sirohydrochlorin ferrochelatase family. The protein in the C-terminal section; belongs to the precorrin methyltransferase family.

It catalyses the reaction uroporphyrinogen III + 2 S-adenosyl-L-methionine = precorrin-2 + 2 S-adenosyl-L-homocysteine + H(+). The enzyme catalyses precorrin-2 + NAD(+) = sirohydrochlorin + NADH + 2 H(+). The catalysed reaction is siroheme + 2 H(+) = sirohydrochlorin + Fe(2+). The protein operates within cofactor biosynthesis; adenosylcobalamin biosynthesis; precorrin-2 from uroporphyrinogen III: step 1/1. Its pathway is cofactor biosynthesis; adenosylcobalamin biosynthesis; sirohydrochlorin from precorrin-2: step 1/1. It functions in the pathway porphyrin-containing compound metabolism; siroheme biosynthesis; precorrin-2 from uroporphyrinogen III: step 1/1. It participates in porphyrin-containing compound metabolism; siroheme biosynthesis; siroheme from sirohydrochlorin: step 1/1. The protein operates within porphyrin-containing compound metabolism; siroheme biosynthesis; sirohydrochlorin from precorrin-2: step 1/1. Multifunctional enzyme that catalyzes the SAM-dependent methylations of uroporphyrinogen III at position C-2 and C-7 to form precorrin-2 via precorrin-1. Then it catalyzes the NAD-dependent ring dehydrogenation of precorrin-2 to yield sirohydrochlorin. Finally, it catalyzes the ferrochelation of sirohydrochlorin to yield siroheme. This is Siroheme synthase from Stutzerimonas stutzeri (strain A1501) (Pseudomonas stutzeri).